Here is a 2661-residue protein sequence, read N- to C-terminus: 3-methylorcinaldehyde synthase tropA (2661 aa).

The interval 14–271 (LLFGSQSLSF…HWSGHEAEVD (258 aa)) is N-terminal acylcarrier protein transacylase domain (SAT). The 417-residue stretch at 380–796 (GDDIAIVGAS…GSNASMVITQ (417 aa)) folds into the Ketosynthase family 3 (KS3) domain. Residues Cys545, His680, and His719 each act as for beta-ketoacyl synthase activity in the active site. A malonyl-CoA:ACP transacylase (MAT) domain region spans residues 901–1211 (LCFGGQVSTF…QAMSITTDKG (311 aa)). Ser988 serves as the catalytic For acyl/malonyl transferase activity. Residues 1283-1425 (PDTILSFVGY…GTLVVVPMED (143 aa)) form an N-terminal hotdog fold region. Residues 1283-1600 (PDTILSFVGY…FVRIPRKGLA (318 aa)) form the PKS/mFAS DH domain. A product template (PT) domain region spans residues 1288–1599 (SFVGYQDSNK…QFVRIPRKGL (312 aa)). The active-site Proton acceptor; for dehydratase activity is His1318. Residues 1453 to 1600 (AEEILQGRTI…FVRIPRKGLA (148 aa)) form a C-terminal hotdog fold region. The active-site Proton donor; for dehydratase activity is Asp1509. Residues 1614-1656 (ATNAQSRAIPPPSTNTTQSSSQQTPIPKAAAPKKEKKRPGNPK) form a disordered region. Over residues 1627 to 1643 (TNTTQSSSQQTPIPKAA) the composition is skewed to low complexity. The region spanning 1654–1731 (NPKLDVLPKL…QLVRVVESIV (78 aa)) is the Carrier 1 domain. At Ser1691 the chain carries O-(pantetheine 4'-phosphoryl)serine. The disordered stretch occupies residues 1734–1762 (EGSETSNLSSDDDDENGTPSTPETDLSDA). The Carrier 2 domain occupies 1764 to 1841 (VDAVVDNAEL…DLRQTAPGAA (78 aa)). An O-(pantetheine 4'-phosphoryl)serine modification is found at Ser1801. The interval 1998 to 2231 (QYQNVNELIF…GFGRVDWSDG (234 aa)) is methyltransferase (CMeT) domain. The tract at residues 2271–2659 (GVDLLSPAIR…FISYWRSISF (389 aa)) is thioesterase (TE) domain.

It participates in secondary metabolite biosynthesis. Non-reducing polyketide synthase; part of the gene cluster that mediates the biosynthesis of the tropolone class of fungal maleic anhydrides. The pathway begins with the synthesis of 3-methylorcinaldehyde by the non-reducing polyketide synthase (PKS) tropA. 3-methylorcinaldehyde is the substrate for the FAD-dependent monooxygenase tropB to yield a dearomatized hydroxycyclohexadione. The 2-oxoglutarate-dependent dioxygenase tropC then performs the oxidative ring expansion to provide the first tropolone metabolite stipitaldehyde. Trop D converts stipitaldehyde into stipitacetal which is in turn converted to stipitalide by the short-chain dehydrogenase/reductase tropE. The next steps involve tropF, tropG, tropH, tropI and tropJ to form successive tropolone maleic anhydrides including stipitaldehydic, stipitatonic and stipitatic acids. This Talaromyces stipitatus (strain ATCC 10500 / CBS 375.48 / QM 6759 / NRRL 1006) (Penicillium stipitatum) protein is 3-methylorcinaldehyde synthase tropA.